The following is a 480-amino-acid chain: MKLDAPFNLDPNVKVRTRFAPSPTGYLHVGGARTALYSWLYAKHNNGEFVLRIEDTDLERSTPEATAAIIEGMEWLNLPWEHGPYYQTKRFDRYNQVIDEMIEQGLAYRCYCTKEHLEELRHTQEQNKEKPRYDRHCLHDHNHSPDEPHVVRFKNPTEGSVVFDDAVRGRIEISNSELDDLIIRRTDGSPTYNFCVVVDDWDMGITHVVRGEDHINNTPRQINILKAIGAPIPTYAHVSMINGDDGQKLSKRHGAVSVMQYRDDGYLPEALINYLVRLGWGHGDQEIFSREEMINYFELDHVSKSASAFNTEKLQWLNQHYIRELPPEYVAKHLEWHYKDQGIDTSNGPALTDIVSMLAERCKTLKEMARSSRYFFEEFETFDEAAAKKHFKGNAAEALTKVKEKLTALSSWDLHSTHEAIEQTAAELEVGMGKVGMPLRVAVTGSGQSPSMDVTLVGIGRDRVLARIQRAIDFIHAQNA.

The 'HIGH' region motif lies at 21 to 31 (PSPTGYLHVGG). Zn(2+) is bound by residues Cys-110, Cys-112, Cys-137, and His-139. The 'KMSKS' region signature appears at 248–252 (KLSKR). Lys-251 is a binding site for ATP.

This sequence belongs to the class-I aminoacyl-tRNA synthetase family. Glutamate--tRNA ligase type 1 subfamily. In terms of assembly, monomer. It depends on Zn(2+) as a cofactor.

The protein resides in the cytoplasm. The catalysed reaction is tRNA(Glu) + L-glutamate + ATP = L-glutamyl-tRNA(Glu) + AMP + diphosphate. In terms of biological role, catalyzes the attachment of glutamate to tRNA(Glu) in a two-step reaction: glutamate is first activated by ATP to form Glu-AMP and then transferred to the acceptor end of tRNA(Glu). This chain is Glutamate--tRNA ligase, found in Haemophilus influenzae (strain PittEE).